The chain runs to 355 residues: 3-isopropylmalate dehydrogenase (355 aa).

Residues arginine 90, arginine 100, arginine 128, and aspartate 222 each coordinate substrate. Mg(2+)-binding residues include aspartate 222, aspartate 246, and aspartate 250. 280-292 contributes to the NAD(+) binding site; it reads GSAPDIAGKGVAN.

Belongs to the isocitrate and isopropylmalate dehydrogenases family. LeuB type 1 subfamily. In terms of assembly, homodimer. The cofactor is Mg(2+). Mn(2+) serves as cofactor.

Its subcellular location is the cytoplasm. It catalyses the reaction (2R,3S)-3-isopropylmalate + NAD(+) = 4-methyl-2-oxopentanoate + CO2 + NADH. It functions in the pathway amino-acid biosynthesis; L-leucine biosynthesis; L-leucine from 3-methyl-2-oxobutanoate: step 3/4. Catalyzes the oxidation of 3-carboxy-2-hydroxy-4-methylpentanoate (3-isopropylmalate) to 3-carboxy-4-methyl-2-oxopentanoate. The product decarboxylates to 4-methyl-2 oxopentanoate. This Cupriavidus pinatubonensis (strain JMP 134 / LMG 1197) (Cupriavidus necator (strain JMP 134)) protein is 3-isopropylmalate dehydrogenase.